The sequence spans 1549 residues: Ferredoxin-dependent glutamate synthase (1549 aa).

Cys-37 (for GATase activity) is an active-site residue. Residues 37–435 (CGVGFIAHLD…PGEMIVLDLQ (399 aa)) form the Glutamine amidotransferase type-2 domain. 1116 to 1173 (LHEVHCLLVENNLREKVILRVDGGLRTGQDVVMAALLGADEYGFGTIAMIAGGCIMAR) is a binding site for FMN. Residues Cys-1169, Cys-1175, and Cys-1180 each coordinate [3Fe-4S] cluster.

This sequence belongs to the glutamate synthase family. Monomer. [3Fe-4S] cluster is required as a cofactor. FAD serves as cofactor. It depends on FMN as a cofactor.

The protein resides in the plastid. It localises to the chloroplast stroma. It carries out the reaction 2 oxidized [2Fe-2S]-[ferredoxin] + 2 L-glutamate = L-glutamine + 2 reduced [2Fe-2S]-[ferredoxin] + 2-oxoglutarate + 2 H(+). The protein operates within amino-acid biosynthesis; L-glutamate biosynthesis via GLT pathway; L-glutamate from 2-oxoglutarate and L-glutamine (ferredoxin route): step 1/1. It functions in the pathway energy metabolism; nitrogen metabolism. This chain is Ferredoxin-dependent glutamate synthase (gltB), found in Cyanidium caldarium (Red alga).